The chain runs to 648 residues: MTPLLELKDIRRSYPAGDEQVEVLKGISLDIYAGEMVAIVGASGSGKSTLMNILGCLDKATSGTYRVAGQDVATLDADALAQLRREHFGFIFQRYHLLSHLTAEQNVEVPAVYAGLERKQRLLRAQELLQRLGLEDRTEYYPAQLSGGQQQRVSIARALMNGGQVILADEPTGALDSHSGEEVMAILHQLRDRGHTVIIVTHDPQVAAQAERVIEIRDGEIVRNPPAIEKVNVTGGTEPVVNTVSGWRQFVSGFNEALTMAWRALAANKMRTLLTMLGIIIGIASVVSIVVVGDAAKQMVLADIRSIGTNTIDVYPGKDFGDDDPQYQQALKYDDLIAIQKQPWVASATPAVSQNLRLRYNNVDVAASANGVSGDYFNVYGMTFSEGNTFNQEQLNGRAQVVVLDSNTRRQLFPHKADVVGEVILVGNMPARVIGVAEEKQSMFGSSKVLRVWLPYSTMSGRVMGQSWLNSITVRVKEGFDSAEAEQQLTRLLSLRHGKKDFFTWNMDGVLKTVEKTTRTLQLFLTLVAVISLVVGGIGVMNIMLVSVTERTREIGIRMAVGARASDVLQQFLIEAVLVCLVGGALGITLSLLIAFTLQLFLPGWEIGFSPLALLLAFLCSTVTGILFGWLPARNAARLDPVDALARE.

Residues Met-1–Thr-272 are Cytoplasmic-facing. The ABC transporter domain occupies Leu-5 to Thr-243. ATP is bound at residue Gly-41–Ser-48. A helical membrane pass occupies residues Leu-273–Gly-293. The Periplasmic portion of the chain corresponds to Asp-294–Gln-522. The helical transmembrane segment at Leu-523 to Ile-543 threads the bilayer. The Cytoplasmic segment spans residues Met-544 to Glu-575. A helical transmembrane segment spans residues Ala-576–Phe-596. The Periplasmic segment spans residues Thr-597–Ser-610. A helical membrane pass occupies residues Pro-611–Leu-631. Residues Pro-632–Glu-648 are Cytoplasmic-facing.

The protein belongs to the ABC transporter superfamily. Macrolide exporter (TC 3.A.1.122) family. Homodimer. Part of the tripartite efflux system MacAB-TolC, which is composed of an inner membrane transporter, MacB, a periplasmic membrane fusion protein, MacA, and an outer membrane component, TolC. The complex forms a large protein conduit and can translocate molecules across both the inner and outer membranes. Interacts with MacA.

The protein resides in the cell inner membrane. ATPase activity is stimulated by interaction with MacA and inhibited by vanadate. Part of the tripartite efflux system MacAB-TolC. MacB is a non-canonical ABC transporter that contains transmembrane domains (TMD), which form a pore in the inner membrane, and an ATP-binding domain (NBD), which is responsible for energy generation. When overexpressed, the system confers resistance against macrolides composed of 14- and 15-membered lactones but no or weak resistance against 16-membered ones. In addition, the system could also transport R-LPS or a similar glycolipid. In Escherichia coli (strain K12), this protein is Macrolide export ATP-binding/permease protein MacB.